A 589-amino-acid chain; its full sequence is Muscarinic acetylcholine receptor M3 (589 aa).

Topologically, residues 1–66 are extracellular; sequence MTLHSNSTTS…DPLGGHTIWQ (66 aa). N-linked (GlcNAc...) asparagine glycans are attached at residues N6, N15, N41, N48, and N52. Residues 67-90 form a helical membrane-spanning segment; the sequence is VVFIAFLTGFLALVTIIGNILVIV. The Cytoplasmic segment spans residues 91–103; the sequence is AFKVNKQLKTVNN. The helical transmembrane segment at 104-129 threads the bilayer; sequence YFLLSLACADLIIGVISMNLFTTYII. The Extracellular portion of the chain corresponds to 130–141; the sequence is MNRWALGNLACD. An intrachain disulfide couples C140 to C220. The chain crosses the membrane as a helical span at residues 142 to 163; the sequence is LWLSIDYVASNASVMNLLVISF. At 164-183 the chain is on the cytoplasmic side; that stretch reads DRYFSITRPLTYRAKRTTKR. Residues 184–205 form a helical membrane-spanning segment; that stretch reads AGVMIGLAWVISFVLWAPAILF. Residues 206-228 lie on the Extracellular side of the membrane; it reads WQYFVGKRTVPPGECFIQFLSEP. The chain crosses the membrane as a helical span at residues 229 to 251; the sequence is TITFGTAIAAFYMPVTIMTILYW. Residues 252 to 490 are Cytoplasmic-facing; it reads RIYKETEKRT…SLIKEKKAAQ (239 aa). The Basolateral sorting signal motif lies at 274–280; the sequence is AEAENFV. 2 disordered regions span residues 275 to 295 and 323 to 356; these read EAENFVHPTGSSRSCSSYELQ and AEQMDQDHSSSDSWNNNDAAASLENSASSDEEDI. Residues 283 to 295 show a composition bias toward polar residues; it reads TGSSRSCSSYELQ. Residues 333–344 are compositionally biased toward low complexity; it reads SDSWNNNDAAAS. Residue S384 is modified to Phosphoserine. A helical transmembrane segment spans residues 491–513; it reads TLSAILLAFIITWTPYNIMVLVN. Residues 514–525 are Extracellular-facing; sequence TFCDSCIPKTYW. C516 and C519 are disulfide-bonded. Residues 526–545 form a helical membrane-spanning segment; sequence NLGYWLCYINSTVNPVCYAL. At 546-589 the chain is on the cytoplasmic side; that stretch reads CNKTFRTTFKMLLLCQCDKRKRRKQQYQQRQSVIFHKRVPEQAL.

This sequence belongs to the G-protein coupled receptor 1 family. Muscarinic acetylcholine receptor subfamily. CHRM3 sub-subfamily. Homodimer; the dimers can form tetramers. Interacts with NALCN. Interacts with TMEM147. Expressed in cerebral cortex, submandibular gland, hypothalamus, pancreas, liver, and ileum.

Its subcellular location is the cell membrane. It localises to the postsynaptic cell membrane. The protein localises to the basolateral cell membrane. The protein resides in the endoplasmic reticulum membrane. Functionally, the muscarinic acetylcholine receptor mediates various cellular responses, including inhibition of adenylate cyclase, breakdown of phosphoinositides and modulation of potassium channels through the action of G proteins. Primary transducing effect is Pi turnover. This Mus musculus (Mouse) protein is Muscarinic acetylcholine receptor M3 (Chrm3).